The primary structure comprises 486 residues: Aspartyl/glutamyl-tRNA(Asn/Gln) amidotransferase subunit B (486 aa).

This sequence belongs to the GatB/GatE family. GatB subfamily. As to quaternary structure, heterotrimer of A, B and C subunits.

The catalysed reaction is L-glutamyl-tRNA(Gln) + L-glutamine + ATP + H2O = L-glutaminyl-tRNA(Gln) + L-glutamate + ADP + phosphate + H(+). The enzyme catalyses L-aspartyl-tRNA(Asn) + L-glutamine + ATP + H2O = L-asparaginyl-tRNA(Asn) + L-glutamate + ADP + phosphate + 2 H(+). Its function is as follows. Allows the formation of correctly charged Asn-tRNA(Asn) or Gln-tRNA(Gln) through the transamidation of misacylated Asp-tRNA(Asn) or Glu-tRNA(Gln) in organisms which lack either or both of asparaginyl-tRNA or glutaminyl-tRNA synthetases. The reaction takes place in the presence of glutamine and ATP through an activated phospho-Asp-tRNA(Asn) or phospho-Glu-tRNA(Gln). This is Aspartyl/glutamyl-tRNA(Asn/Gln) amidotransferase subunit B from Orientia tsutsugamushi (strain Boryong) (Rickettsia tsutsugamushi).